Consider the following 287-residue polypeptide: ATP synthase gamma chain (287 aa).

This sequence belongs to the ATPase gamma chain family. F-type ATPases have 2 components, CF(1) - the catalytic core - and CF(0) - the membrane proton channel. CF(1) has five subunits: alpha(3), beta(3), gamma(1), delta(1), epsilon(1). CF(0) has three main subunits: a, b and c.

Its subcellular location is the cell inner membrane. Its function is as follows. Produces ATP from ADP in the presence of a proton gradient across the membrane. The gamma chain is believed to be important in regulating ATPase activity and the flow of protons through the CF(0) complex. This is ATP synthase gamma chain from Geobacter sp. (strain M21).